We begin with the raw amino-acid sequence, 312 residues long: Putative electron transfer flavoprotein subunit YdiR (312 aa).

254–282 (LYLTLGISGQIQHMVGGNGAKVIVAINKD) lines the FAD pocket.

This sequence belongs to the ETF alpha-subunit/FixB family. As to quaternary structure, ydiR and YdiQ form a heterodimer.

May play a role in a redox process. The protein is Putative electron transfer flavoprotein subunit YdiR (ydiR) of Escherichia coli (strain K12).